A 289-amino-acid chain; its full sequence is Cyclin-dependent kinase inhibitor 4 (289 aa).

Disordered stretches follow at residues 1–31, 56–160, and 227–248; these read MGKY…ESSI, LQQQ…VSES, and SESN…TTPE. Residues 13 to 28 are compositionally biased toward gly residues; that stretch reads AGAGAGGGGGGGGGGE. The span at 56–80 shows a compositional bias: low complexity; sequence LQQQQQRCLLQKPSSPSSLPPTSAS. A compositionally biased stretch (polar residues) spans 134-144; sequence CGRNPNPRSNL.

This sequence belongs to the CDI family. ICK/KRP subfamily. As to quaternary structure, specifically interacts with CDKA-1, but not with CDKB1-1. Interacts with CYCD4-1. Binds to FBL17. As to expression, expressed in leaves and flowers and at lower levels in roots.

The protein resides in the nucleus. It localises to the nucleoplasm. Functionally, binds and inhibits CYCD2-1/CDKA-1 complex kinase activity. May target specifically CDKA-1. The chain is Cyclin-dependent kinase inhibitor 4 (KRP4) from Arabidopsis thaliana (Mouse-ear cress).